We begin with the raw amino-acid sequence, 925 residues long: ETO1-like protein 2 (925 aa).

Positions 207–307 (SDISFCVGSE…ECEARLAASV (101 aa)) constitute a BTB domain. One copy of the TPR 1 repeat lies at 409-442 (ALSLHQMGCVLFERKDYKAAQFHFRLASSLGHVY). Positions 509–533 (KYRAVMKFEQKQIKEAFQEIDRLIQ) form a coiled coil. 6 TPR repeats span residues 538–571 (PECLELRAWLYLATGDRESCLRDLRAVLSLEPNY), 664–697 (AERLVYEGWLLYDMGYVEETLTKAEEAISIQRSF), 738–771 (GQALNNLGSIYINLGMLDQAETAYKNAIEIKHIR), 773–803 (RQGLARVYFLKNQRKEACEEMTKLIEKSCSK), 834–867 (TYPYRYRAAVLMDDQRETEAVEELSKAIAFRPEL), and 869–900 (TLHLRAAFHEATGNLSLATQDCEAALCLDPNH).

The protein belongs to the ETO1 family. Interacts with the C-terminal domain of ACS5. As to expression, constitutively expressed in green and etiolated seedlings.

The protein operates within protein modification; protein ubiquitination. Its function is as follows. Potential regulator of the ethylene pathway, which acts by regulating the stability of 1-aminocyclopropane-1-carboxylate synthase (ACS) enzymes. May act as a substrate-specific adapter that connects ACS enzymes, such as ACS5, to ubiquitin ligase complexes, leading to proteasomal degradation of ACS enzymes. The protein is ETO1-like protein 2 (EOL2) of Arabidopsis thaliana (Mouse-ear cress).